Here is a 516-residue protein sequence, read N- to C-terminus: Oxysterol-binding protein-like protein 1 (516 aa).

Disordered regions lie at residues 168–240 and 459–501; these read PLGK…SQKS and KQEI…EEGK. The segment covering 178–187 has biased composition (polar residues); it reads SRTTSSQSVA. Residue serine 182 is modified to Phosphoserine. The segment covering 197 to 206 has biased composition (basic residues); the sequence is TSKKKSSKKN. Residues 218 to 238 show a composition bias toward polar residues; sequence DRSSTAPSTAESNNEHLSSSQ.

This sequence belongs to the OSBP family.

It localises to the endoplasmic reticulum. This is Oxysterol-binding protein-like protein 1 (obp1) from Schizosaccharomyces pombe (strain 972 / ATCC 24843) (Fission yeast).